Here is a 280-residue protein sequence, read N- to C-terminus: SLGSSTLLQSQISGFGGSQKLQKISFSNPNSLTFTRRRIQTVVNASSRVDKFSKSDIIVSPSILSANFSKLGEQVKAIEQAGCDWIHVDVMDGRFVPNITIGPLVVDSLRPITDLPLDVHLMIVEPDQRVPDFIKAGADIVSVHCEQSSTIHLHRTINQIKSLGAKAGVVLNPGTPLTAIEYVLDAVDLVLIMSVNPGFGGQSFIESQVKKISDLRKICAERGLNPWIEVDGGVGPKNAYKVIEAGANALVAGSAVFGAPDYAEAIKGIKTSKRPEAVAV.

A chloroplast-targeting transit peptide spans 1-45; it reads SLGSSTLLQSQISGFGGSQKLQKISFSNPNSLTFTRRRIQTVVNA. Position 62 (Ser62) interacts with substrate. Positions 87, 89, and 120 each coordinate a divalent metal cation. Asp89 acts as the Proton acceptor in catalysis. Substrate contacts are provided by residues His120, 198–201, 231–233, and 253–254; these read GFGG, DGG, and GS. Asp231 contacts a divalent metal cation. The active-site Proton donor is Asp231.

It belongs to the ribulose-phosphate 3-epimerase family. Homohexamer. The cofactor is Co(2+). Fe(2+) is required as a cofactor. It depends on Mn(2+) as a cofactor. Requires Zn(2+) as cofactor. In terms of tissue distribution, highest level of expression in leaves, whereas it is low in roots, tubers, and stems.

The protein localises to the plastid. Its subcellular location is the chloroplast thylakoid membrane. It carries out the reaction D-ribulose 5-phosphate = D-xylulose 5-phosphate. It participates in carbohydrate biosynthesis; Calvin cycle. In terms of biological role, catalyzes the reversible epimerization of D-ribulose 5-phosphate to D-xylulose 5-phosphate. The chain is Ribulose-phosphate 3-epimerase, chloroplastic from Solanum tuberosum (Potato).